The chain runs to 343 residues: Multidrug resistance protein MdtN (343 aa).

The Cytoplasmic segment spans residues 1–12 (MESTPKKAPRSK). A helical; Signal-anchor for type II membrane protein transmembrane segment spans residues 13–33 (FPALLVVALALVALVFVIWRV). At 34–343 (DSAPSTNDAY…ASAVANLEPQ (310 aa)) the chain is on the periplasmic side.

This sequence belongs to the membrane fusion protein (MFP) (TC 8.A.1) family. As to quaternary structure, could be part of a tripartite efflux system composed of MdtN, MdtO and MdtP.

The protein resides in the cell inner membrane. Functionally, could be involved in resistance to puromycin, acriflavine and tetraphenylarsonium chloride. This Escherichia coli O6:H1 (strain CFT073 / ATCC 700928 / UPEC) protein is Multidrug resistance protein MdtN (mdtN).